A 130-amino-acid polypeptide reads, in one-letter code: Ribonuclease VapC46 (130 aa).

Positions 4-118 (IYLDSSAIVK…CTYDDRMRDA (115 aa)) constitute a PINc domain. Mg(2+)-binding residues include aspartate 7 and aspartate 91.

The protein belongs to the PINc/VapC protein family. It depends on Mg(2+) as a cofactor.

Toxic component of a type II toxin-antitoxin (TA) system. An RNase. Upon expression in M.smegmatis inhibits colony formation. Its toxic effect is neutralized by coexpression with cognate antitoxin VapB46. The protein is Ribonuclease VapC46 of Mycobacterium tuberculosis (strain ATCC 25618 / H37Rv).